The sequence spans 624 residues: Adhesion and hyphal regulator 1 (624 aa).

The zn(2)-C6 fungal-type DNA-binding region spans 19–46; sequence CVTCRDRHIKCDEQQPVCKNCQKSNRKC. Disordered regions lie at residues 63-84 and 230-250; these read DDNK…YAFP and PQHH…TDPN. The segment covering 237–250 has biased composition (polar residues); sequence DTSQHQETTSTDPN.

As to quaternary structure, interacts with MCM1.

The protein localises to the nucleus. Its function is as follows. Transcription factor that binds the promoters of genes involved in biofilm formation, which include several key adhesion genes, and recruits MCM1 to these sites. Plays an important role in hyphal growth and virulence. Promotes conversion of opaque cells to white phase, but needs existence of EFG1, a key regulator required for maintenance of the white state. The protein is Adhesion and hyphal regulator 1 (AHR1) of Candida albicans (strain SC5314 / ATCC MYA-2876) (Yeast).